A 284-amino-acid chain; its full sequence is Shikimate dehydrogenase (NADP(+)) (284 aa).

Residues 20-22 and Ser-67 each bind shikimate; that span reads SIS. Lys-71 (proton acceptor) is an active-site residue. NADP(+) is bound at residue Asp-83. Residues Asn-92 and Asp-107 each contribute to the shikimate site. Residues 129 to 133 and Ile-227 each bind NADP(+); that span reads GAGGA. Tyr-229 lines the shikimate pocket. An NADP(+)-binding site is contributed by Gly-250.

It belongs to the shikimate dehydrogenase family. As to quaternary structure, homodimer.

The catalysed reaction is shikimate + NADP(+) = 3-dehydroshikimate + NADPH + H(+). The protein operates within metabolic intermediate biosynthesis; chorismate biosynthesis; chorismate from D-erythrose 4-phosphate and phosphoenolpyruvate: step 4/7. Involved in the biosynthesis of the chorismate, which leads to the biosynthesis of aromatic amino acids. Catalyzes the reversible NADPH linked reduction of 3-dehydroshikimate (DHSA) to yield shikimate (SA). The protein is Shikimate dehydrogenase (NADP(+)) of Streptococcus pneumoniae (strain JJA).